Reading from the N-terminus, the 407-residue chain is Serine/threonine transporter SstT (407 aa).

A run of 9 helical transmembrane segments spans residues 12–32, 42–62, 81–101, 141–161, 179–199, 218–238, 245–267, 288–308, and 330–350; these read GNLI…GISS, LGIL…FILI, IIIL…LANF, ALSS…GIAL, VLKI…GLVA, ILLV…IVFF, FPLI…SSAA, ISIP…IAIL, and IIAT…LLLI.

This sequence belongs to the dicarboxylate/amino acid:cation symporter (DAACS) (TC 2.A.23) family.

It localises to the cell inner membrane. The enzyme catalyses L-serine(in) + Na(+)(in) = L-serine(out) + Na(+)(out). It carries out the reaction L-threonine(in) + Na(+)(in) = L-threonine(out) + Na(+)(out). Involved in the import of serine and threonine into the cell, with the concomitant import of sodium (symport system). The sequence is that of Serine/threonine transporter SstT from Campylobacter jejuni subsp. jejuni serotype O:6 (strain 81116 / NCTC 11828).